We begin with the raw amino-acid sequence, 276 residues long: Large ribosomal subunit protein uL2 (276 aa).

Residues 221 to 276 (RGSAMNPNDHPHGGGEGRAPIGRKSPMTPWGKKARGIKTRDRKKSSNELIIRRRTK) form a disordered region. The segment covering 252–263 (KKARGIKTRDRK) has biased composition (basic residues).

This sequence belongs to the universal ribosomal protein uL2 family. In terms of assembly, part of the 50S ribosomal subunit. Forms a bridge to the 30S subunit in the 70S ribosome.

One of the primary rRNA binding proteins. Required for association of the 30S and 50S subunits to form the 70S ribosome, for tRNA binding and peptide bond formation. It has been suggested to have peptidyltransferase activity; this is somewhat controversial. Makes several contacts with the 16S rRNA in the 70S ribosome. The chain is Large ribosomal subunit protein uL2 from Phytoplasma australiense.